The primary structure comprises 420 residues: Glucose-1-phosphate adenylyltransferase 2 (420 aa).

Alpha-D-glucose 1-phosphate-binding positions include Tyr109, Gly175, 190-191 (EK), and Ser208.

The protein belongs to the bacterial/plant glucose-1-phosphate adenylyltransferase family. As to quaternary structure, homotetramer.

It catalyses the reaction alpha-D-glucose 1-phosphate + ATP + H(+) = ADP-alpha-D-glucose + diphosphate. Its pathway is glycan biosynthesis; glycogen biosynthesis. Its function is as follows. Involved in the biosynthesis of ADP-glucose, a building block required for the elongation reactions to produce glycogen. Catalyzes the reaction between ATP and alpha-D-glucose 1-phosphate (G1P) to produce pyrophosphate and ADP-Glc. The protein is Glucose-1-phosphate adenylyltransferase 2 of Pseudoalteromonas atlantica (strain T6c / ATCC BAA-1087).